The primary structure comprises 696 residues: Chitin synthase regulator SKT5 (696 aa).

Disordered regions lie at residues 37–67 and 90–145; these read GQDF…SANQ and QEED…IKKR. Basic and acidic residues predominate over residues 41 to 53; sequence SDNKENRENRDNE. Low complexity predominate over residues 104-126; the sequence is LNNSNNTSLSSLGSTPTNSPSPG. Residues 129 to 139 show a composition bias toward polar residues; the sequence is RQTNSSTSLTK. The residue at position 148 (Ser148) is a Phosphoserine. Sel1-like repeat units lie at residues 271–306, 307–342, 343–382, 386–423, 424–460, 461–498, and 499–534; these read SDAQ…KHGH, IESA…SRNH, PSAM…ARAN, AAAP…SLGH, VPSA…LKGD, SVAM…NAGL, and PKAQ…GNED. 2 positions are modified to phosphoserine: Ser561 and Ser563. Residue Thr564 is modified to Phosphothreonine. 3 stretches are compositionally biased toward polar residues: residues 576–593, 605–634, and 651–661; these read SNVG…TFFT, LQIN…SSAK, and VSLSNMGSSNM. The segment at 576–696 is disordered; it reads SNVGSNSRVS…GKKKKDCVIM (121 aa). Residues 662 to 675 show a composition bias toward basic and acidic residues; it reads IRKDFPAVKTESKK. The span at 680–696 shows a compositional bias: basic residues; sequence KNKKDKQGKKKKDCVIM. The residue at position 693 (Cys693) is a Cysteine methyl ester. Cys693 carries S-farnesyl cysteine lipidation. A propeptide spans 694–696 (removed in mature form); that stretch reads VIM.

The protein belongs to the SKT5 family. May interact with CHS3 and seems to be an adapter (along with BNI4) to link CHS3 to septins. In terms of processing, farnesylation is required for chitin synthase CHS3 activity but is not required for SKT5 membrane association.

Its subcellular location is the cell membrane. Its function is as follows. Activator of the chitin synthase CHS3 which polymerizes chitin, a structural polymer of the fungal cell wall. The protein is Chitin synthase regulator SKT5 of Saccharomyces cerevisiae (strain ATCC 204508 / S288c) (Baker's yeast).